A 156-amino-acid polypeptide reads, in one-letter code: Endogenous retrovirus group K member 8 Pro protein (156 aa).

Positions 21–96 constitute a Peptidase A2 domain; it reads FEGLVDTGAD…IPLNLWGRDL (76 aa). D26 is a catalytic residue. Positions 111–156 constitute a G-patch domain; sequence YSPTSQKIMTKRGYIPGKGLGKNEDGIKIPFEAKINQKREGIGYPF.

This sequence belongs to the peptidase A2 family. HERV class-II K(HML-2) subfamily. As to quaternary structure, active as a homodimer. In terms of processing, autoproteolytically processed at the N-terminus. Expected C-terminal autoprocessing not detected. The sequence shown is that of the processed Pro protein.

The enzyme catalyses Processing at the authentic HIV-1 PR recognition site and release of the mature p17 matrix and the p24 capsid protein, as a result of the cleavage of the -SQNY-|-PIVQ- cleavage site.. Retroviral proteases have roles in the processing of the primary translation products and the maturation of the viral particle. Endogenous Pro proteins may have kept, lost or modified their original function during evolution. The polypeptide is Endogenous retrovirus group K member 8 Pro protein (ERVK-8) (Homo sapiens (Human)).